The sequence spans 209 residues: Putative 3-methyladenine DNA glycosylase (209 aa).

The tract at residues 189–209 is disordered; sequence YISKTQPGPPPKKRKKGLESS. Residues 199–209 are compositionally biased toward basic residues; sequence PKKRKKGLESS.

Belongs to the DNA glycosylase MPG family.

This Chlorobaculum tepidum (strain ATCC 49652 / DSM 12025 / NBRC 103806 / TLS) (Chlorobium tepidum) protein is Putative 3-methyladenine DNA glycosylase.